A 663-amino-acid chain; its full sequence is Dual specificity protein phosphatase 8 (663 aa).

Residues 23–138 (GPGGPLVIDS…FSSCFPGLCE (116 aa)) form the Rhodanese domain. The region spanning 160-302 (GLTRILPHLY…LLEYERSLKL (143 aa)) is the Tyrosine-protein phosphatase domain. The active-site Phosphocysteine intermediate is Cys-246. Disordered stretches follow at residues 313 to 367 (LGTP…STAP) and 404 to 624 (YAPS…FKRR). Composition is skewed to low complexity over residues 334–353 (STSE…REGS), 427–448 (LDSP…PDSV), and 546–557 (SAGAPGPGNSSS). The span at 558 to 577 (SGGGGGGGGGGGGGGGGGGS) shows a compositional bias: gly residues. Over residues 578-600 (SSSNSSSSSSSSSSSSSSSSSSS) the composition is skewed to low complexity.

Belongs to the protein-tyrosine phosphatase family. Non-receptor class dual specificity subfamily. Monomer. In terms of tissue distribution, expressed predominantly in brain and lung.

Its subcellular location is the cytoplasm. The protein resides in the nucleus. The enzyme catalyses O-phospho-L-tyrosyl-[protein] + H2O = L-tyrosyl-[protein] + phosphate. It catalyses the reaction O-phospho-L-seryl-[protein] + H2O = L-seryl-[protein] + phosphate. The catalysed reaction is O-phospho-L-threonyl-[protein] + H2O = L-threonyl-[protein] + phosphate. In terms of biological role, has phosphatase activity with synthetic phosphatase substrates and negatively regulates mitogen-activated protein kinase activity, presumably by catalysing their dephosphorylation. Expected to display protein phosphatase activity toward phosphotyrosine, phosphoserine and phosphothreonine residues. This is Dual specificity protein phosphatase 8 (Dusp8) from Mus musculus (Mouse).